The sequence spans 95 residues: MRFILNLQFFASKKGVGSTKNGRDSESKRLGAKKADGQFANAGSIIFRQRGTKIHPGQNVGRGGDDTLFALVSGIVKYEKFGKGRTRVKVVAPAE.

Positions 1-10 (MRFILNLQFF) are excised as a propeptide.

The protein belongs to the bacterial ribosomal protein bL27 family. The N-terminus is cleaved by ribosomal processing cysteine protease Prp.

In Mesoplasma florum (strain ATCC 33453 / NBRC 100688 / NCTC 11704 / L1) (Acholeplasma florum), this protein is Large ribosomal subunit protein bL27.